We begin with the raw amino-acid sequence, 28 residues long: Phospholipase A2 3 (28 aa).

The protein belongs to the phospholipase A2 family. Group I subfamily. It depends on Ca(2+) as a cofactor. In terms of tissue distribution, expressed by the venom gland.

It localises to the secreted. The enzyme catalyses a 1,2-diacyl-sn-glycero-3-phosphocholine + H2O = a 1-acyl-sn-glycero-3-phosphocholine + a fatty acid + H(+). Snake venom phospholipase A2 (PLA2) that inhibits neuromuscular transmission by blocking acetylcholine release from the nerve termini. PLA2 catalyzes the calcium-dependent hydrolysis of the 2-acyl groups in 3-sn-phosphoglycerides. This Micrurus nigrocinctus (Central American coral snake) protein is Phospholipase A2 3.